Here is a 138-residue protein sequence, read N- to C-terminus: Aspartate 1-decarboxylase (138 aa).

S25 serves as the catalytic Schiff-base intermediate with substrate; via pyruvic acid. Residue S25 is modified to Pyruvic acid (Ser). T57 contributes to the substrate binding site. Y58 acts as the Proton donor in catalysis. Residue 73 to 75 (GAA) participates in substrate binding. The interval 116 to 138 (ELGGDPAQVPDGSGLKNPRHPEA) is disordered.

It belongs to the PanD family. In terms of assembly, heterooctamer of four alpha and four beta subunits. Pyruvate serves as cofactor. Post-translationally, is synthesized initially as an inactive proenzyme, which is activated by self-cleavage at a specific serine bond to produce a beta-subunit with a hydroxyl group at its C-terminus and an alpha-subunit with a pyruvoyl group at its N-terminus.

It is found in the cytoplasm. It catalyses the reaction L-aspartate + H(+) = beta-alanine + CO2. Its pathway is cofactor biosynthesis; (R)-pantothenate biosynthesis; beta-alanine from L-aspartate: step 1/1. Functionally, catalyzes the pyruvoyl-dependent decarboxylation of aspartate to produce beta-alanine. The chain is Aspartate 1-decarboxylase from Corynebacterium jeikeium (strain K411).